Here is a 507-residue protein sequence, read N- to C-terminus: ATP synthase subunit alpha, chloroplastic (507 aa).

Position 170 to 177 (170 to 177) interacts with ATP; sequence GDRQTGKT.

This sequence belongs to the ATPase alpha/beta chains family. F-type ATPases have 2 components, CF(1) - the catalytic core - and CF(0) - the membrane proton channel. CF(1) has five subunits: alpha(3), beta(3), gamma(1), delta(1), epsilon(1). CF(0) has four main subunits: a, b, b' and c.

It is found in the plastid. The protein localises to the chloroplast thylakoid membrane. It catalyses the reaction ATP + H2O + 4 H(+)(in) = ADP + phosphate + 5 H(+)(out). Its function is as follows. Produces ATP from ADP in the presence of a proton gradient across the membrane. The alpha chain is a regulatory subunit. This is ATP synthase subunit alpha, chloroplastic from Solanum bulbocastanum (Wild potato).